The following is a 312-amino-acid chain: Zinc finger CCCH domain-containing protein 25 (312 aa).

Positions 36-114 (AYVFVGGIPY…RIVRVDHVSK (79 aa)) constitute an RRM domain. Residues 130–157 (REARGVCYAFQKGECNRGASCRYSHDEQ) form a C3H1-type zinc finger. The tract at residues 153-312 (SHDEQRNANT…DSERYRKSRR (160 aa)) is disordered. Composition is skewed to basic and acidic residues over residues 166 to 184 (SKEESKARWEHDRHHEPPM), 197 to 210 (RFPDRAKEENKSTG), and 219 to 312 (EAYK…KSRR).

The sequence is that of Zinc finger CCCH domain-containing protein 25 from Oryza sativa subsp. japonica (Rice).